The primary structure comprises 1452 residues: MNESHEAGKNSSTNVEEREEEVLRLARQFTEQSSYSTAGQTPFAAEAGSALDPNGERFNARAWCKAMLQMHIGDKEAHPLRTLGVAFSNLNVHGFGSDTDYQKSVGNVWLKTLSLARIAFGQKQRKVDILQNLEGLVEAGEMLVVLGPPGSGCSTFLKTIAGETYGFHVDKNSNINFQGIAKQMAHEFRGEAIYTAEVDVHFPKLTVGDTLYFAARARTPRHIPGGVNATQYAGHMRDVIMAMFGISHTKNTIVGNDFIRGVSGGERKRVSIAEACLSNAPLQCWDNSTRGLDSANAIEFCKTLRMQADINGTTACVSLYQAPQAAYDYFDKVLVLYEGREIYFGPTSMAKHYFLQMGFVCPDRQTDADFLTSMTSHLERVVQPGYEDRVPRTPDEFAARWKASPQRAQLMQHIKSYNAKFALDGEYLDKFKQSRRAQQAKAQRVSSPYTLSYVQQVKLCLWRGYQRLKADPSVTISSLFGNTIISLVIASIFYNLKADTSTFFQRGALLFFAVLMNALGCGLEMLTLYAQRGIIEKHSRYALYHPSAEAFSSMIMDLPYKILNAITSNIVLYFMTNLRREPGAFFFFVFTSFILTLTMSMFFRSMASLSRSLVQVLPFSAVLLLGLSMYTGFAIPTGYMLGWARWIAYINPISYGFESLMINEFHNRDFPCMDYVPSGPGYTDVGLNNRVCSTVRSVPGQAFVNGNAYIESAYSYTASHKWRNIGVIFAYMFLLGAVYLVATDFITEKKPKGEILVFPRGHKALKKGKSDEDLEGGGGRSATVEKIGSDGLAMIERQTAIFQWKDVCFDIKIGKENCRILDHVDGWVKPGILTALMGVSGAGKTTLLDVLATRTTMGIISGEMLVDGQPRDESFQRKTGYAQQQDLHLSTATVREALEFSALLRQSAHVPRQEKIDYVTEVIKLLDMTEYADAVIGVPGEGLNVEQRKRLTIGVELAARPQLLLFLDEPTSGLDSQTSWAILDLLDKLKKNGQAILCTIHQPSAMLFQRFDRLLFLQAGGRTVYFGEIGQNSQILIDYFVRNGAPPCPPDANPAEWMLDVIGAAPGSHTSINWFETWRRSPEYARVQEHLAELKHERRHQTNLFRTTSGQKREDKDSYREFAAPFWAQLYQVQVRVFQQIWRSPTYIYSKTALCVLSALFVGFSLFHTPNTIQGLQNQMFGIFMLLTLFGQLIQQIMPHFVAQRALYEVRDRPAKTYSWKAFLIANIVVELPWNSLMSVLMFLCWYYPIGLYRNAEPTDAVHLRGTQMWLMIWTFLLFSSTFAHFMIAAFDAAENAGNLGNLLFLLCLLFCGVLATPDQLPRFWIFMYRVSPFTYLVSGMLSVGISNTNVTCADNEYLRFDPVNGTCGEYMGSYMSNLGGYLADEMATANCSFCPIKETNVFLGRVSSSYSDIWRNFGLMWVFIVFNIFAACSLYWWVRVPRDKKPVAKAE.

Residues 1–20 are disordered; it reads MNESHEAGKNSSTNVEEREE. 5 N-linked (GlcNAc...) asparagine glycosylation sites follow: N2, N10, N228, N287, and N311. An ABC transporter 1 domain is found at 110-363; it reads LKTLSLARIA…FLQMGFVCPD (254 aa). A run of 6 helical transmembrane segments spans residues 474–494, 508–528, 554–574, 583–603, 616–636, and 725–745; these read VTIS…SIFY, ALLF…MLTL, MIMD…VLYF, GAFF…SMFF, VLPF…FAIP, and IGVI…ATDF. An ABC transporter 2 domain is found at 802-1044; that stretch reads FQWKDVCFDI…ILIDYFVRNG (243 aa). ATP is bound at residue 838–845; sequence GVSGAGKT. A run of 6 helical transmembrane segments spans residues 1153–1173, 1183–1203, 1223–1243, 1271–1291, 1297–1317, and 1324–1344; these read ALCV…PNTI, IFML…HFVA, FLIA…VLMF, LMIW…IAAF, AGNL…VLAT, and FWIF…MLSV. N-linked (GlcNAc...) asparagine glycosylation is found at N1350, N1365, and N1391. The chain crosses the membrane as a helical span at residues 1418 to 1438; the sequence is FGLMWVFIVFNIFAACSLYWW.

It belongs to the ABC transporter superfamily. ABCG family. PDR (TC 3.A.1.205) subfamily.

The protein resides in the membrane. ABC transporter that seems not to be involved in the efflux of toxic substances, at least not the classical compounds such as itraconazole, amphotericin B, voriconazole, posaconazole, ravuconazole, or echinocandins. This chain is ABC multidrug transporter A-1, found in Aspergillus fumigatus (strain ATCC MYA-4609 / CBS 101355 / FGSC A1100 / Af293) (Neosartorya fumigata).